An 81-amino-acid chain; its full sequence is uncharacterized protein (81 aa).

Residues 46-81 (ASSPVVKRKSLVKRKSPVKRSPLKKRSQMRTSPCEA) are disordered. Over residues 51–73 (VKRKSLVKRKSPVKRSPLKKRSQ) the composition is skewed to basic residues.

This is an uncharacterized protein from Frog virus 3 (isolate Goorha) (FV-3).